Reading from the N-terminus, the 280-residue chain is Pantothenate synthetase (280 aa).

ATP is bound at residue 30 to 37 (MGYLHEGH). The Proton donor role is filled by H37. Q61 lines the (R)-pantoate pocket. Q61 is a beta-alanine binding site. 147–150 (GKKD) contributes to the ATP binding site. Residue Q153 coordinates (R)-pantoate. ATP contacts are provided by residues V176 and 184 to 187 (MSSR).

Belongs to the pantothenate synthetase family. As to quaternary structure, homodimer.

It is found in the cytoplasm. The enzyme catalyses (R)-pantoate + beta-alanine + ATP = (R)-pantothenate + AMP + diphosphate + H(+). Its pathway is cofactor biosynthesis; (R)-pantothenate biosynthesis; (R)-pantothenate from (R)-pantoate and beta-alanine: step 1/1. Functionally, catalyzes the condensation of pantoate with beta-alanine in an ATP-dependent reaction via a pantoyl-adenylate intermediate. The polypeptide is Pantothenate synthetase (Sulfurihydrogenibium sp. (strain YO3AOP1)).